Consider the following 67-residue polypeptide: Small, acid-soluble spore protein 2 (67 aa).

The protein belongs to the alpha/beta-type SASP family.

Its function is as follows. SASP are bound to spore DNA. They are double-stranded DNA-binding proteins that cause DNA to change to an a-like conformation. They protect the DNA backbone from chemical and enzymatic cleavage and are thus involved in dormant spore's high resistance to UV light. In Sporosarcina ureae, this protein is Small, acid-soluble spore protein 2 (Su-2).